Consider the following 394-residue polypeptide: Purine ribonucleoside efflux pump NepI (394 aa).

At M1–A21 the chain is on the cytoplasmic side. Residues V22–L42 traverse the membrane as a helical segment. At L43–E54 the chain is on the periplasmic side. The helical transmembrane segment at G55–I75 threads the bilayer. The Cytoplasmic segment spans residues T76–R85. A helical membrane pass occupies residues Y86–N106. Position 107 (S107) is a topological domain, periplasmic. The chain crosses the membrane as a helical span at residues F108 to M128. Residues S129–S147 lie on the Cytoplasmic side of the membrane. Residues V148–G168 form a helical membrane-spanning segment. The Periplasmic portion of the chain corresponds to E169 to N175. Residues V176–P196 form a helical membrane-spanning segment. Over S197–R215 the chain is Cytoplasmic. The helical transmembrane segment at P216–F236 threads the bilayer. Over T237–T255 the chain is Periplasmic. A helical transmembrane segment spans residues L256 to L276. Residues K277–K281 lie on the Cytoplasmic side of the membrane. Residues L282–G302 traverse the membrane as a helical segment. Residues S303 to K305 lie on the Periplasmic side of the membrane. The helical transmembrane segment at I306–W326 threads the bilayer. Over S327 to S343 the chain is Cytoplasmic. Residues I344–L364 form a helical membrane-spanning segment. The Periplasmic segment spans residues D365 to N366. Residues I367 to V387 traverse the membrane as a helical segment. Over T388–K394 the chain is Cytoplasmic.

Belongs to the major facilitator superfamily. DHA1 family. NepI (TC 2.A.1.2.26) subfamily.

Its subcellular location is the cell inner membrane. The enzyme catalyses inosine(in) + H(+)(out) = inosine(out) + H(+)(in). It catalyses the reaction guanosine(in) + H(+)(out) = guanosine(out) + H(+)(in). Functionally, involved in the efflux of purine ribonucleosides, such as inosine and guanosine. This is Purine ribonucleoside efflux pump NepI from Shigella dysenteriae serotype 1 (strain Sd197).